Here is a 451-residue protein sequence, read N- to C-terminus: Tubulin alpha chain (451 aa).

Gln11 provides a ligand contact to GTP. Lys40 is modified (N6-acetyllysine). GTP contacts are provided by Glu71, Gly144, Thr145, Thr179, Asn206, and Asn228. Glu71 serves as a coordination point for Mg(2+). Glu254 is an active-site residue. The disordered stretch occupies residues 432–451 (YEEVGAESAEGDDEDEGEDY).

Belongs to the tubulin family. Dimer of alpha and beta chains. A typical microtubule is a hollow water-filled tube with an outer diameter of 25 nm and an inner diameter of 15 nM. Alpha-beta heterodimers associate head-to-tail to form protofilaments running lengthwise along the microtubule wall with the beta-tubulin subunit facing the microtubule plus end conferring a structural polarity. Microtubules usually have 13 protofilaments but different protofilament numbers can be found in some organisms and specialized cells. The cofactor is Mg(2+). Post-translationally, undergoes a tyrosination/detyrosination cycle, the cyclic removal and re-addition of a C-terminal tyrosine residue by the enzymes tubulin tyrosine carboxypeptidase (TTCP) and tubulin tyrosine ligase (TTL), respectively. Acetylation of alpha chains at Lys-40 stabilizes microtubules and affects affinity and processivity of microtubule motors. This modification has a role in multiple cellular functions, ranging from cell motility, cell cycle progression or cell differentiation to intracellular trafficking and signaling.

It is found in the cytoplasm. It localises to the cytoskeleton. The catalysed reaction is GTP + H2O = GDP + phosphate + H(+). Its function is as follows. Tubulin is the major constituent of microtubules, a cylinder consisting of laterally associated linear protofilaments composed of alpha- and beta-tubulin heterodimers. Microtubules grow by the addition of GTP-tubulin dimers to the microtubule end, where a stabilizing cap forms. Below the cap, tubulin dimers are in GDP-bound state, owing to GTPase activity of alpha-tubulin. The polypeptide is Tubulin alpha chain (TBA) (Daucus carota (Wild carrot)).